A 423-amino-acid polypeptide reads, in one-letter code: Histidine--tRNA ligase (423 aa).

Belongs to the class-II aminoacyl-tRNA synthetase family. In terms of assembly, homodimer.

The protein resides in the cytoplasm. The enzyme catalyses tRNA(His) + L-histidine + ATP = L-histidyl-tRNA(His) + AMP + diphosphate + H(+). In Geobacillus sp. (strain WCH70), this protein is Histidine--tRNA ligase.